The following is a 168-amino-acid chain: Transcriptional regulator MraZ (168 aa).

SpoVT-AbrB domains are found at residues 8 to 51 and 90 to 140; these read EYNQ…GGDR and ALNM…KADT.

It belongs to the MraZ family. As to quaternary structure, forms oligomers.

It localises to the cytoplasm. The protein resides in the nucleoid. In Cereibacter sphaeroides (strain ATCC 17029 / ATH 2.4.9) (Rhodobacter sphaeroides), this protein is Transcriptional regulator MraZ.